We begin with the raw amino-acid sequence, 574 residues long: Cytochrome P450 4g15 (574 aa).

The interval 288 to 327 (REREQNGGVDQTPSTAGSDEKDREKDKEKASPVAGLSYGQ) is disordered. Residues 295 to 304 (GVDQTPSTAG) show a composition bias toward polar residues. A compositionally biased stretch (basic and acidic residues) spans 305–317 (SDEKDREKDKEKA). Residues glutamate 379 and cysteine 519 each contribute to the heme site.

Belongs to the cytochrome P450 family. Heme is required as a cofactor. As to expression, expressed in larval brain cortex cells and ring glands and weakly in larval digestive system and adult nervous system.

The protein resides in the endoplasmic reticulum membrane. Its subcellular location is the microsome membrane. Probably involved in steroid hormones biosynthesis. This is Cytochrome P450 4g15 (Cyp4g15) from Drosophila melanogaster (Fruit fly).